We begin with the raw amino-acid sequence, 217 residues long: Probable transaldolase (217 aa).

Lysine 83 serves as the catalytic Schiff-base intermediate with substrate.

Belongs to the transaldolase family. Type 3B subfamily.

The protein resides in the cytoplasm. It catalyses the reaction D-sedoheptulose 7-phosphate + D-glyceraldehyde 3-phosphate = D-erythrose 4-phosphate + beta-D-fructose 6-phosphate. Its pathway is carbohydrate degradation; pentose phosphate pathway; D-glyceraldehyde 3-phosphate and beta-D-fructose 6-phosphate from D-ribose 5-phosphate and D-xylulose 5-phosphate (non-oxidative stage): step 2/3. Its function is as follows. Transaldolase is important for the balance of metabolites in the pentose-phosphate pathway. The chain is Probable transaldolase from Lactiplantibacillus plantarum (strain ATCC BAA-793 / NCIMB 8826 / WCFS1) (Lactobacillus plantarum).